Here is a 172-residue protein sequence, read N- to C-terminus: Signal peptidase complex catalytic subunit SEC11 (172 aa).

At 1–14 (MLSGLQNPRQAAAQ) the chain is on the cytoplasmic side. A helical; Signal-anchor for type II membrane protein transmembrane segment spans residues 15 to 35 (LMNFALILSTAFMMWKGLSVA). At 36-172 (TDSPSPIVVV…MGLLVVIQRE (137 aa)) the chain is on the lumenal side. Catalysis depends on charge relay system residues Ser-49, His-90, and Asp-115. Residues 158 to 169 (VMLGIMGLLVVI) form a C-terminal short (CTS) helix region.

It belongs to the peptidase S26B family. As to quaternary structure, component of the signal peptidase complex (SPC) composed of a catalytic subunit SEC11 and three accessory subunits SPC1, SPC2 and SPC3. The complex induces a local thinning of the ER membrane which is used to measure the length of the signal peptide (SP) h-region of protein substrates. This ensures the selectivity of the complex towards h-regions shorter than 18-20 amino acids. SPC associates with the translocon complex.

The protein resides in the endoplasmic reticulum membrane. The enzyme catalyses Cleavage of hydrophobic, N-terminal signal or leader sequences from secreted and periplasmic proteins.. In terms of biological role, catalytic component of the signal peptidase complex (SPC) which catalyzes the cleavage of N-terminal signal sequences from nascent proteins as they are translocated into the lumen of the endoplasmic reticulum. Specifically cleaves N-terminal signal peptides that contain a hydrophobic alpha-helix (h-region) shorter than 18-20 amino acids. The polypeptide is Signal peptidase complex catalytic subunit SEC11 (SEC11) (Metarhizium acridum (strain CQMa 102)).